The primary structure comprises 742 residues: MELQNDLESLDNELNDFSEDPFRDDFITDEDAVRSGWRSAWTRMKYWFYKNRLKWTNNPIVIGDAKDSRDGSNFRRGIPLYELDANGQPIDTELVDENELSFGTGFHSKVPFKIIFRTLFGSLVFAIFLILMINIAKPHHSTRVLSHFGSPEFDPYVKYFNGTHEFFPLTIVISLDGFHPSLISKRNTPFLHDLYELKYDGGMNITSTPFMVPSFPTETFPNHWTLVTGQYPIHHGIVSNVFWDPDLNEEFHPGVLDPRIWNNNDTEPIWQTVQSAFDGDIPFKAATHMWPGSDVNYTKYNEEKLQPEHKNPIARERTPFYFDEFNAKEPLSQKLSKIIEYVDMSTLNERPQLILGYVPNVDAFGHKHGYPSESEYYYEDFTETLGEVDTFLKQLVESLQERNLTSFTNLVIVSDHGMSDIVVPSNVIIWEDLLDEKLRKDYVSHAYLEGPMMAISLKDSGNINEVYHNLKTSIDEDKYTVYVNGNFPKEWNFNDGKNHHMASIWIVPEPGYAVMKKEQLKKVAKGDHKDKNEDNVFTIGSHGYDNNAIDMRSVFIGMGPYFPQGYIEPFQNTEIYNLLCDICGVAEKDRNSNDGTGMLMNQLREPQSSEEVEIEDDFDYLVSKFGEFSTYNIIWGGYPEETEQDNVDNDNDDNDDGNTDEIAAMPSSSLTIKLEMTTSIPSATETLLGETSPSSRSSSSSSIQASATASTVGDWLQDIINDAKDLIDDIIDSIDDLVDSDT.

Over 1–113 (MELQNDLESL…TGFHSKVPFK (113 aa)) the chain is Cytoplasmic. A helical membrane pass occupies residues 114–134 (IIFRTLFGSLVFAIFLILMIN). Residues 135 to 742 (IAKPHHSTRV…SIDDLVDSDT (608 aa)) lie on the Extracellular side of the membrane. Asparagine 161 and asparagine 204 each carry an N-linked (GlcNAc...) asparagine glycan. The interval 168–545 (PLTIVISLDG…VFTIGSHGYD (378 aa)) is phosphodiesterase. The Nucleophile role is filled by threonine 219. 3 N-linked (GlcNAc...) asparagine glycosylation sites follow: asparagine 264, asparagine 296, and asparagine 403. Residues 640–659 (EETEQDNVDNDNDDNDDGNT) show a composition bias toward acidic residues. Disordered stretches follow at residues 640-670 (EETEQDNVDNDNDDNDDGNTDEIAAMPSSSL) and 686-711 (TLLGETSPSSRSSSSSSIQASATAST). A compositionally biased stretch (low complexity) spans 691–711 (TSPSSRSSSSSSIQASATAST).

Belongs to the nucleotide pyrophosphatase/phosphodiesterase family. Post-translationally, autophosphorylated as part of the catalytic cycle of phosphodiesterase/pyrophosphatase activity. In terms of processing, N-glycosylated.

The protein localises to the membrane. It carries out the reaction Hydrolytically removes 5'-nucleotides successively from the 3'-hydroxy termini of 3'-hydroxy-terminated oligonucleotides.. The enzyme catalyses a ribonucleoside 5'-triphosphate + H2O = a ribonucleoside 5'-phosphate + diphosphate + H(+). It catalyses the reaction a 2'-deoxyribonucleoside 5'-triphosphate + H2O = a 2'-deoxyribonucleoside 5'-phosphate + diphosphate + H(+). In terms of biological role, mediates extracellular nucleotide derived phosphate hydrolysis along with NPP2 and PHO5. The chain is Ectonucleotide pyrophosphatase/phosphodiesterase 1 (NPP1) from Saccharomyces cerevisiae (strain ATCC 204508 / S288c) (Baker's yeast).